The sequence spans 421 residues: Extracellular signal-regulated kinase 1 (421 aa).

Positions 70 to 375 constitute a Protein kinase domain; that stretch reads YQILEIVGEG…VEDALKHPYL (306 aa). ATP contacts are provided by residues 76–84 and K99; that span reads VGEGAYGIV. D194 acts as the Proton acceptor in catalysis. Phosphothreonine is present on T230. The short motif at 230-232 is the TXY element; that stretch reads TEY. A Phosphotyrosine modification is found at Y232.

Belongs to the protein kinase superfamily. CMGC Ser/Thr protein kinase family. MAP kinase subfamily. It depends on Mg(2+) as a cofactor. Post-translationally, dually phosphorylated on Thr-230 and Tyr-232, which activates the enzyme.

It catalyses the reaction L-seryl-[protein] + ATP = O-phospho-L-seryl-[protein] + ADP + H(+). It carries out the reaction L-threonyl-[protein] + ATP = O-phospho-L-threonyl-[protein] + ADP + H(+). Its activity is regulated as follows. Activated by tyrosine and threonine phosphorylation. The protein is Extracellular signal-regulated kinase 1 (CEK1) of Candida albicans (strain SC5314 / ATCC MYA-2876) (Yeast).